The chain runs to 299 residues: MKQKTIKNKVELVGIGLHKGVPVKMELEPLEVDSGIVFYRSDLGVSIEFKAENVIDTTMATVIAKGEAKISTIEHLLSAIHAYGIDNIRISLDNEEVPIMDGSAIGYCMLLEEAGIVAQNAPKKAIVIKKSIEIVDEKKFVRVEPSERTIFDFKIDFNHPVIRQQHYKFTFSTQAYKEEIARARTFGFLHEVNYLRSKGLAKGGDLSNCIVLDESSILNKEGLRYKEEFVRHKILDAIGDMALLGMPLLGSYISFAGSHKLNHLLTKQILSDEKAYEVVSLEDKVEEAALDYAFLHEQH.

The Zn(2+) site is built by His75, His232, and Asp236. His259 acts as the Proton donor in catalysis.

It belongs to the LpxC family. Requires Zn(2+) as cofactor.

The enzyme catalyses a UDP-3-O-[(3R)-3-hydroxyacyl]-N-acetyl-alpha-D-glucosamine + H2O = a UDP-3-O-[(3R)-3-hydroxyacyl]-alpha-D-glucosamine + acetate. Its pathway is glycolipid biosynthesis; lipid IV(A) biosynthesis; lipid IV(A) from (3R)-3-hydroxytetradecanoyl-[acyl-carrier-protein] and UDP-N-acetyl-alpha-D-glucosamine: step 2/6. Catalyzes the hydrolysis of UDP-3-O-myristoyl-N-acetylglucosamine to form UDP-3-O-myristoylglucosamine and acetate, the committed step in lipid A biosynthesis. The polypeptide is UDP-3-O-acyl-N-acetylglucosamine deacetylase (Helicobacter hepaticus (strain ATCC 51449 / 3B1)).